Consider the following 263-residue polypeptide: Cell division protein DivIB (263 aa).

Residues 1-32 are Cytoplasmic-facing; that stretch reads MNPGQDREKIVNIEERIPKIKEQRKQKANRRL. Residues 33–53 traverse the membrane as a helical segment; that stretch reads ISFIMLFFIMVLIIVYLQTPI. The segment at 51–123 is alpha; sequence TPISKVSTIS…NKINIAIEEY (73 aa). The 70-residue stretch at 54–123 folds into the POTRA domain; it reads SKVSTISVTG…NKINIAIEEY (70 aa). Residues 54–263 lie on the Extracellular side of the membrane; that stretch reads SKVSTISVTG…DKAAKKEDEN (210 aa). Residues 124–251 form a beta region; it reads KAIAYLEKDD…EVATYFEEFG (128 aa). The interval 229 to 263 is gamma; the sequence is SQLSSNKKGIIHLEVATYFEEFGKNDKAAKKEDEN.

The protein belongs to the FtsQ/DivIB family. DivIB subfamily. As to quaternary structure, interacts with FtsL, DivIC and PBP-2B.

It is found in the cell membrane. Functionally, cell division protein that may be involved in stabilizing or promoting the assembly of the division complex. Plays an essential role in division at high temperatures, maybe by protecting FtsL from degradation or by promoting formation of the FtsL-DivIC complex. May modulate the transpeptidase activity of PBP-2B. Also required for efficient sporulation at all temperatures. Could be directly involved in the engulfment process or be required to form a sporulation septum competent for engulfment. Influences the Spo0J/Soj system of chromosome segregation. This Bacillus subtilis (strain 168) protein is Cell division protein DivIB.